Here is a 246-residue protein sequence, read N- to C-terminus: Pyridoxine 5'-phosphate synthase (246 aa).

Position 12 (Asn-12) interacts with 3-amino-2-oxopropyl phosphate. 14–15 is a binding site for 1-deoxy-D-xylulose 5-phosphate; sequence DH. Arg-23 is a binding site for 3-amino-2-oxopropyl phosphate. His-48 serves as the catalytic Proton acceptor. 1-deoxy-D-xylulose 5-phosphate-binding residues include Arg-50 and His-55. Glu-75 acts as the Proton acceptor in catalysis. Position 105 (Thr-105) interacts with 1-deoxy-D-xylulose 5-phosphate. His-196 (proton donor) is an active-site residue. Residues Gly-197 and 218–219 contribute to the 3-amino-2-oxopropyl phosphate site; that span reads GH.

Belongs to the PNP synthase family. As to quaternary structure, homooctamer; tetramer of dimers.

The protein resides in the cytoplasm. It catalyses the reaction 3-amino-2-oxopropyl phosphate + 1-deoxy-D-xylulose 5-phosphate = pyridoxine 5'-phosphate + phosphate + 2 H2O + H(+). Its pathway is cofactor biosynthesis; pyridoxine 5'-phosphate biosynthesis; pyridoxine 5'-phosphate from D-erythrose 4-phosphate: step 5/5. Catalyzes the complicated ring closure reaction between the two acyclic compounds 1-deoxy-D-xylulose-5-phosphate (DXP) and 3-amino-2-oxopropyl phosphate (1-amino-acetone-3-phosphate or AAP) to form pyridoxine 5'-phosphate (PNP) and inorganic phosphate. This chain is Pyridoxine 5'-phosphate synthase, found in Thioalkalivibrio sulfidiphilus (strain HL-EbGR7).